We begin with the raw amino-acid sequence, 269 residues long: S-adenosylmethionine decarboxylase proenzyme (269 aa).

The active-site Schiff-base intermediate with substrate; via pyruvic acid is Ser118. At Ser118 the chain carries Pyruvic acid (Ser); by autocatalysis. The active-site Proton acceptor; for processing activity is His123. Cys146 serves as the catalytic Proton donor; for catalytic activity.

The protein belongs to the prokaryotic AdoMetDC family. Type 2 subfamily. In terms of assembly, heterooctamer of four alpha and four beta chains arranged as a tetramer of alpha/beta heterodimers. Pyruvate serves as cofactor. In terms of processing, is synthesized initially as an inactive proenzyme. Formation of the active enzyme involves a self-maturation process in which the active site pyruvoyl group is generated from an internal serine residue via an autocatalytic post-translational modification. Two non-identical subunits are generated from the proenzyme in this reaction, and the pyruvate is formed at the N-terminus of the alpha chain, which is derived from the carboxyl end of the proenzyme. The post-translation cleavage follows an unusual pathway, termed non-hydrolytic serinolysis, in which the side chain hydroxyl group of the serine supplies its oxygen atom to form the C-terminus of the beta chain, while the remainder of the serine residue undergoes an oxidative deamination to produce ammonia and the pyruvoyl group blocking the N-terminus of the alpha chain.

It catalyses the reaction S-adenosyl-L-methionine + H(+) = S-adenosyl 3-(methylsulfanyl)propylamine + CO2. Its pathway is amine and polyamine biosynthesis; S-adenosylmethioninamine biosynthesis; S-adenosylmethioninamine from S-adenosyl-L-methionine: step 1/1. Catalyzes the decarboxylation of S-adenosylmethionine to S-adenosylmethioninamine (dcAdoMet), the propylamine donor required for the synthesis of the polyamines spermine and spermidine from the diamine putrescine. This Brevibacillus brevis (strain 47 / JCM 6285 / NBRC 100599) protein is S-adenosylmethionine decarboxylase proenzyme.